Here is a 292-residue protein sequence, read N- to C-terminus: Bifunctional protein FolD (292 aa).

NADP(+)-binding positions include 169–171 (GRS) and Ser194.

Belongs to the tetrahydrofolate dehydrogenase/cyclohydrolase family. Homodimer.

It catalyses the reaction (6R)-5,10-methylene-5,6,7,8-tetrahydrofolate + NADP(+) = (6R)-5,10-methenyltetrahydrofolate + NADPH. The catalysed reaction is (6R)-5,10-methenyltetrahydrofolate + H2O = (6R)-10-formyltetrahydrofolate + H(+). Its pathway is one-carbon metabolism; tetrahydrofolate interconversion. Its function is as follows. Catalyzes the oxidation of 5,10-methylenetetrahydrofolate to 5,10-methenyltetrahydrofolate and then the hydrolysis of 5,10-methenyltetrahydrofolate to 10-formyltetrahydrofolate. The sequence is that of Bifunctional protein FolD from Nostoc punctiforme (strain ATCC 29133 / PCC 73102).